We begin with the raw amino-acid sequence, 395 residues long: Calreticulin (395 aa).

The signal sequence occupies residues 1 to 15 (MKSLCLLAIVAVVSA). The cysteines at positions 101 and 133 are disulfide-linked. An alpha-D-glucoside contacts are provided by tyrosine 105, lysine 107, tyrosine 124, and aspartate 131. Repeat copies occupy residues 186 to 197 (AQTGSLEEDWDL), 205 to 216 (DPDAKKPEDWDE), 222 to 233 (DAEDAKPEDWEK), 239 to 250 (DPDAKKPEDWDD), 254 to 264 (GEWEPPMIDNP), 268 to 278 (GEWKPKQIKNP), and 282 to 292 (GKWIHPEIENP). The 4 X approximate repeats stretch occupies residues 186–250 (AQTGSLEEDW…DAKKPEDWDD (65 aa)). The interval 193–301 (EDWDLLPAKK…PEYTPDDELY (109 aa)) is P-domain. Over residues 202–212 (KIKDPDAKKPE) the composition is skewed to basic and acidic residues. Residues 202-255 (KIKDPDAKKPEDWDEREYIDDAEDAKPEDWEKPEHIPDPDAKKPEDWDDEMDGE) form a disordered region. The span at 213-224 (DWDEREYIDDAE) shows a compositional bias: acidic residues. The segment covering 225–246 (DAKPEDWEKPEHIPDPDAKKPE) has biased composition (basic and acidic residues). The tract at residues 254–292 (GEWEPPMIDNPEYKGEWKPKQIKNPAYKGKWIHPEIENP) is 3 X approximate repeats. The segment at 302–395 (SYESWGAIGF…KEEEEGHDEL (94 aa)) is C-domain. Aspartate 312 contacts an alpha-D-glucoside. The segment covering 340–380 (ETFDKLKTVEKEKKEKADEETRKAEEEARKKAEEEKEAKKD) has biased composition (basic and acidic residues). The segment at 340–395 (ETFDKLKTVEKEKKEKADEETRKAEEEARKKAEEEKEAKKDDDEEEKEEEEGHDEL) is disordered. The segment covering 381–395 (DDEEEKEEEEGHDEL) has biased composition (acidic residues). Residues 392–395 (HDEL) carry the Prevents secretion from ER motif.

It belongs to the calreticulin family. Cleaved by caspase ced-3 in vitro.

It is found in the endoplasmic reticulum lumen. Its function is as follows. Molecular calcium-binding chaperone promoting folding, oligomeric assembly and quality control in the endoplasmic reticulum (ER) via the calreticulin/calnexin cycle. This lectin may interact transiently with almost all of the monoglucosylated glycoproteins that are synthesized in the ER. Probably by controlling the folding of extracellular matrix protein unc-52/Perlecan, may play a role in the formation of fibrous organelles, a hemidesmosome-like structure attaching muscles to the epidermis. Protects dopaminergic neurons against oxidative stress-induced neurodegeneration. May play a role in protection against ER stress. Plays a role in modulating lifespan, acting by influencing ER calcium homeostasis. In Caenorhabditis elegans, this protein is Calreticulin (crt-1).